The sequence spans 498 residues: Cytochrome P450 monooxygenase 110 (498 aa).

A helical transmembrane segment spans residues 7–24; sequence YVFALLGILATLYFVRWS. Residue Asn-425 is glycosylated (N-linked (GlcNAc...) asparagine). Heme is bound at residue Cys-440.

Belongs to the cytochrome P450 family. Heme is required as a cofactor.

It localises to the membrane. Its pathway is secondary metabolite biosynthesis. Cytochrome P450 monooxygenase that is able to use dehydroabietic acid and testosterone as substrates for oxidation, suggesting that the natural substrate(s) may be structurally related to steroid compounds. The chain is Cytochrome P450 monooxygenase 110 from Postia placenta (strain ATCC 44394 / Madison 698-R) (Brown rot fungus).